Here is a 419-residue protein sequence, read N- to C-terminus: D-amino acid dehydrogenase (419 aa).

3-17 (VIVLGSGVIGVASAY) contacts FAD.

Belongs to the DadA oxidoreductase family. It depends on FAD as a cofactor.

It carries out the reaction a D-alpha-amino acid + A + H2O = a 2-oxocarboxylate + AH2 + NH4(+). The protein operates within amino-acid degradation; D-alanine degradation; NH(3) and pyruvate from D-alanine: step 1/1. In terms of biological role, oxidative deamination of D-amino acids. This is D-amino acid dehydrogenase from Acinetobacter baylyi (strain ATCC 33305 / BD413 / ADP1).